The chain runs to 374 residues: Methylthioribose-1-phosphate isomerase (374 aa).

The active-site Proton donor is the D251.

The protein belongs to the eIF-2B alpha/beta/delta subunits family. MtnA subfamily.

The protein localises to the cytoplasm. It is found in the nucleus. It carries out the reaction 5-(methylsulfanyl)-alpha-D-ribose 1-phosphate = 5-(methylsulfanyl)-D-ribulose 1-phosphate. It functions in the pathway amino-acid biosynthesis; L-methionine biosynthesis via salvage pathway; L-methionine from S-methyl-5-thio-alpha-D-ribose 1-phosphate: step 1/6. Catalyzes the interconversion of methylthioribose-1-phosphate (MTR-1-P) into methylthioribulose-1-phosphate (MTRu-1-P). The sequence is that of Methylthioribose-1-phosphate isomerase (IDI2) from Oryza sativa subsp. japonica (Rice).